The primary structure comprises 100 residues: Aspartyl/glutamyl-tRNA(Asn/Gln) amidotransferase subunit C (100 aa).

Belongs to the GatC family. Heterotrimer of A, B and C subunits.

The enzyme catalyses L-glutamyl-tRNA(Gln) + L-glutamine + ATP + H2O = L-glutaminyl-tRNA(Gln) + L-glutamate + ADP + phosphate + H(+). It catalyses the reaction L-aspartyl-tRNA(Asn) + L-glutamine + ATP + H2O = L-asparaginyl-tRNA(Asn) + L-glutamate + ADP + phosphate + 2 H(+). Allows the formation of correctly charged Asn-tRNA(Asn) or Gln-tRNA(Gln) through the transamidation of misacylated Asp-tRNA(Asn) or Glu-tRNA(Gln) in organisms which lack either or both of asparaginyl-tRNA or glutaminyl-tRNA synthetases. The reaction takes place in the presence of glutamine and ATP through an activated phospho-Asp-tRNA(Asn) or phospho-Glu-tRNA(Gln). This Streptococcus pneumoniae (strain JJA) protein is Aspartyl/glutamyl-tRNA(Asn/Gln) amidotransferase subunit C.